Consider the following 362-residue polypeptide: Phosphoserine aminotransferase (362 aa).

The L-glutamate site is built by Ser9 and Arg42. Residues 76-77 (GR), Trp102, Thr153, Asp174, and Gln197 contribute to the pyridoxal 5'-phosphate site. Position 198 is an N6-(pyridoxal phosphate)lysine (Lys198). 239–240 (NT) is a binding site for pyridoxal 5'-phosphate.

It belongs to the class-V pyridoxal-phosphate-dependent aminotransferase family. SerC subfamily. Homodimer. Pyridoxal 5'-phosphate is required as a cofactor.

Its subcellular location is the cytoplasm. It catalyses the reaction O-phospho-L-serine + 2-oxoglutarate = 3-phosphooxypyruvate + L-glutamate. It carries out the reaction 4-(phosphooxy)-L-threonine + 2-oxoglutarate = (R)-3-hydroxy-2-oxo-4-phosphooxybutanoate + L-glutamate. It participates in amino-acid biosynthesis; L-serine biosynthesis; L-serine from 3-phospho-D-glycerate: step 2/3. It functions in the pathway cofactor biosynthesis; pyridoxine 5'-phosphate biosynthesis; pyridoxine 5'-phosphate from D-erythrose 4-phosphate: step 3/5. Its function is as follows. Catalyzes the reversible conversion of 3-phosphohydroxypyruvate to phosphoserine and of 3-hydroxy-2-oxo-4-phosphonooxybutanoate to phosphohydroxythreonine. The sequence is that of Phosphoserine aminotransferase from Escherichia coli O127:H6 (strain E2348/69 / EPEC).